A 276-amino-acid polypeptide reads, in one-letter code: Glyoxal reductase (276 aa).

The Proton donor role is filled by Tyr54. Substrate is bound at residue His112. Residue 190 to 242 (SPLMQGQLLDNEVLTQIAEKHNKSVAQVILRWDLQHGVVTIPKSIKEHRIIEN) coordinates NADP(+).

It belongs to the aldo/keto reductase family.

The enzyme catalyses (S)-lactaldehyde + NADP(+) = methylglyoxal + NADPH + H(+). In terms of biological role, reduces glyoxal and methylglyoxal (2-oxopropanal). Is not involved in the vitamin B6 biosynthesis. This chain is Glyoxal reductase (yvgN), found in Bacillus subtilis (strain 168).